A 43-amino-acid polypeptide reads, in one-letter code: SPbeta prophage-derived uncharacterized protein YotD (43 aa).

The polypeptide is SPbeta prophage-derived uncharacterized protein YotD (yotD) (Bacillus subtilis (strain 168)).